The following is a 965-amino-acid chain: Glycine dehydrogenase (decarboxylating) (965 aa).

The residue at position 711 (Lys711) is an N6-(pyridoxal phosphate)lysine.

Belongs to the GcvP family. In terms of assembly, the glycine cleavage system is composed of four proteins: P, T, L and H. Pyridoxal 5'-phosphate is required as a cofactor.

The enzyme catalyses N(6)-[(R)-lipoyl]-L-lysyl-[glycine-cleavage complex H protein] + glycine + H(+) = N(6)-[(R)-S(8)-aminomethyldihydrolipoyl]-L-lysyl-[glycine-cleavage complex H protein] + CO2. Functionally, the glycine cleavage system catalyzes the degradation of glycine. The P protein binds the alpha-amino group of glycine through its pyridoxal phosphate cofactor; CO(2) is released and the remaining methylamine moiety is then transferred to the lipoamide cofactor of the H protein. This Psychrobacter arcticus (strain DSM 17307 / VKM B-2377 / 273-4) protein is Glycine dehydrogenase (decarboxylating).